The chain runs to 577 residues: Proline--tRNA ligase (577 aa).

Belongs to the class-II aminoacyl-tRNA synthetase family. ProS type 1 subfamily. As to quaternary structure, homodimer.

The protein localises to the cytoplasm. It catalyses the reaction tRNA(Pro) + L-proline + ATP = L-prolyl-tRNA(Pro) + AMP + diphosphate. In terms of biological role, catalyzes the attachment of proline to tRNA(Pro) in a two-step reaction: proline is first activated by ATP to form Pro-AMP and then transferred to the acceptor end of tRNA(Pro). As ProRS can inadvertently accommodate and process non-cognate amino acids such as alanine and cysteine, to avoid such errors it has two additional distinct editing activities against alanine. One activity is designated as 'pretransfer' editing and involves the tRNA(Pro)-independent hydrolysis of activated Ala-AMP. The other activity is designated 'posttransfer' editing and involves deacylation of mischarged Ala-tRNA(Pro). The misacylated Cys-tRNA(Pro) is not edited by ProRS. This is Proline--tRNA ligase from Marinobacter nauticus (strain ATCC 700491 / DSM 11845 / VT8) (Marinobacter aquaeolei).